A 595-amino-acid chain; its full sequence is L-fucose isomerase (595 aa).

Active-site proton acceptor residues include glutamate 341 and aspartate 365. Residues glutamate 341, aspartate 365, and histidine 531 each coordinate Mn(2+).

The protein belongs to the L-fucose isomerase family. The cofactor is Mn(2+).

It is found in the cytoplasm. The enzyme catalyses L-fucose = L-fuculose. Its pathway is carbohydrate degradation; L-fucose degradation; L-lactaldehyde and glycerone phosphate from L-fucose: step 1/3. Its function is as follows. Converts the aldose L-fucose into the corresponding ketose L-fuculose. The chain is L-fucose isomerase from Clostridium perfringens (strain 13 / Type A).